Here is a 101-residue protein sequence, read N- to C-terminus: Gamma-secretase subunit PEN-2 (101 aa).

Over 1-17 (MNLERVSNEEKLNLCRK) the chain is Cytoplasmic. An intramembrane region (helical) is located at residues 18-36 (YYLGGFAFLPFLWLVNIFW). Topologically, residues 37 to 57 (FFREAFLAPAYTEQSQIKGYV) are cytoplasmic. The helical transmembrane segment at 58-78 (WRSAVGFLFWVIILATWITIF) threads the bilayer. Over 79–101 (QIYRPRWGALGDYLSFTIPLGTP) the chain is Lumenal.

Belongs to the PEN-2 family. In terms of assembly, the functional gamma-secretase complex is composed of at least four polypeptides: a presenilin homodimer (PSEN1 or PSEN2), nicastrin (NCSTN), APH1 (APH1A or APH1B) and PSENEN.

The protein resides in the endoplasmic reticulum membrane. It is found in the golgi apparatus. It localises to the golgi stack membrane. The protein localises to the cell membrane. Its subcellular location is the membrane. Its function is as follows. Essential subunit of the gamma-secretase complex, an endoprotease complex that catalyzes the intramembrane cleavage of integral membrane proteins such as Notch receptors and APP (amyloid-beta precursor protein). The gamma-secretase complex plays a role in Notch and Wnt signaling cascades and regulation of downstream processes via its role in processing key regulatory proteins, and by regulating cytosolic CTNNB1 levels. PSENEN modulates both endoproteolysis of presenilin and gamma-secretase activity. This chain is Gamma-secretase subunit PEN-2 (Psenen), found in Mus musculus (Mouse).